Here is a 123-residue protein sequence, read N- to C-terminus: Holo-[acyl-carrier-protein] synthase (123 aa).

Mg(2+) is bound by residues D9 and E57.

It belongs to the P-Pant transferase superfamily. AcpS family. It depends on Mg(2+) as a cofactor.

It is found in the cytoplasm. It carries out the reaction apo-[ACP] + CoA = holo-[ACP] + adenosine 3',5'-bisphosphate + H(+). Its function is as follows. Transfers the 4'-phosphopantetheine moiety from coenzyme A to a Ser of acyl-carrier-protein. This Streptomyces avermitilis (strain ATCC 31267 / DSM 46492 / JCM 5070 / NBRC 14893 / NCIMB 12804 / NRRL 8165 / MA-4680) protein is Holo-[acyl-carrier-protein] synthase.